Here is a 498-residue protein sequence, read N- to C-terminus: Probable cytosol aminopeptidase (498 aa).

Residues Lys267 and Asp272 each coordinate Mn(2+). Lys279 is a catalytic residue. Positions 290, 349, and 351 each coordinate Mn(2+). Residue Arg353 is part of the active site.

The protein belongs to the peptidase M17 family. It depends on Mn(2+) as a cofactor.

Its subcellular location is the cytoplasm. The catalysed reaction is Release of an N-terminal amino acid, Xaa-|-Yaa-, in which Xaa is preferably Leu, but may be other amino acids including Pro although not Arg or Lys, and Yaa may be Pro. Amino acid amides and methyl esters are also readily hydrolyzed, but rates on arylamides are exceedingly low.. It carries out the reaction Release of an N-terminal amino acid, preferentially leucine, but not glutamic or aspartic acids.. Functionally, presumably involved in the processing and regular turnover of intracellular proteins. Catalyzes the removal of unsubstituted N-terminal amino acids from various peptides. This is Probable cytosol aminopeptidase from Dechloromonas aromatica (strain RCB).